Reading from the N-terminus, the 480-residue chain is Endothelial transcription factor GATA-2 (480 aa).

Position 73 is a phosphoserine (serine 73). Asymmetric dimethylarginine is present on arginine 86. The segment at serine 119–aspartate 209 is disordered. Positions glycine 143 to glycine 153 are enriched in gly residues. Low complexity predominate over residues proline 185–alanine 203. Serine 192 carries the phosphoserine modification. 2 GATA-type zinc fingers span residues cysteine 295–cysteine 319 and cysteine 349–cysteine 373. A Glycyl lysine isopeptide (Lys-Gly) (interchain with G-Cter in SUMO2) cross-link involves residue lysine 389. The tract at residues histidine 448–glycine 480 is disordered.

In terms of assembly, interacts with BRD3. Interacts with AR and CCAR1. Interacts with MDFIC. Endothelial cells.

It localises to the nucleus. Its function is as follows. Transcriptional activator which regulates endothelin-1 gene expression in endothelial cells. Binds to the consensus sequence 5'-AGATAG-3'. The protein is Endothelial transcription factor GATA-2 (GATA2) of Homo sapiens (Human).